The following is a 310-amino-acid chain: Iron ABC transporter substrate-binding lipoprotein MtsA (310 aa).

The N-terminal stretch at 1-20 (MGKKMSLILGAFLSVFLLVA) is a signal peptide. The N-palmitoyl cysteine moiety is linked to residue Cys-21. Cys-21 carries S-diacylglycerol cysteine lipidation. Positions 68, 140, 206, and 281 each coordinate Fe(2+).

Belongs to the bacterial solute-binding protein 9 family. Lipoprotein receptor antigen (Lrai) subfamily.

It localises to the cell membrane. Functionally, part of the ATP-binding cassette (ABC) transport system MtsABC involved in iron import. Binds iron with high affinity and specificity and delivers it to the membrane permease for translocation into the cytoplasm. Has low affinity for Zn(2+) and Cu(2+). The polypeptide is Iron ABC transporter substrate-binding lipoprotein MtsA (mtsA) (Streptococcus pyogenes serotype M6 (strain ATCC BAA-946 / MGAS10394)).